Reading from the N-terminus, the 293-residue chain is Histamine N-methyltransferase B (293 aa).

Glutamate 28 lines the substrate pocket. 5 residues coordinate S-adenosyl-L-methionine: glycine 60, glutamate 89, glutamine 94, serine 120, and isoleucine 142. A substrate-binding site is contributed by asparagine 283.

This sequence belongs to the class I-like SAM-binding methyltransferase superfamily. HNMT family. Monomer.

It localises to the cytoplasm. It catalyses the reaction histamine + S-adenosyl-L-methionine = N(tau)-methylhistamine + S-adenosyl-L-homocysteine + H(+). Its function is as follows. Inactivates histamine by N-methylation. Plays an important role in degrading histamine and in regulating the airway response to histamine. This chain is Histamine N-methyltransferase B (hnmt-b), found in Xenopus laevis (African clawed frog).